Reading from the N-terminus, the 77-residue chain is U11-lycotoxin-Ls1a (77 aa).

Positions 1–20 (MKLIILTGLVLFAIVSLIEA) are cleaved as a signal peptide. The propeptide occupies 21 to 26 (EEESGR).

The protein belongs to the neurotoxin 19 (CSTX) family. 10 (U11-Lctx) subfamily. Post-translationally, contains 4 disulfide bonds. Expressed by the venom gland.

The protein resides in the secreted. This is U11-lycotoxin-Ls1a from Lycosa singoriensis (Wolf spider).